We begin with the raw amino-acid sequence, 424 residues long: Otefin (424 aa).

An LEM domain is found at 1–30 (MADVDDFDSLSNAELRAKMLAQGLPNIPVT). Residues 1-50 (MADVDDFDSLSNAELRAKMLAQGLPNIPVTDSSRKVLVKRLRASIGGQAS) are required for binding to Med and germline stem cell maintenance. The tract at residues 42 to 186 (RASIGGQASP…SSKRADREEN (145 aa)) is disordered. Serine 44, serine 50, and serine 54 each carry phosphoserine. A Phosphothreonine modification is found at threonine 63. Residues 65–80 (APAPGAPSAPAAASTP) are compositionally biased toward low complexity. Residues 92–99 (ATKARRTI) carry the Nuclear localization signal motif. The span at 103 to 133 (EAKEPVRRLPEEAIRRRPDEADRLRSEEPVA) shows a compositional bias: basic and acidic residues. Serine 152 is modified (phosphoserine). Over residues 157–170 (SERKVVEPLRKPET) the composition is skewed to basic and acidic residues. 2 positions are modified to phosphoserine: serine 192 and serine 198. The tract at residues 259–278 (PSVPSARAQTTSSTRSYDYA) is disordered. Residues 262–274 (PSARAQTTSSTRS) are compositionally biased toward low complexity. A required for binding to Med region spans residues 271 to 400 (STRSYDYASN…NRWLNSLEQK (130 aa)). Serine 321 bears the Phosphoserine mark. Threonine 324 is modified (phosphothreonine). Serine 326 is subject to Phosphoserine. Threonine 358 bears the Phosphothreonine mark. Phosphoserine occurs at positions 378 and 385. Residues 400–424 (KYHIKSKLFIVLLVLLLIGVYYIFY) form an essential for nuclear membrane localization and germline stem cell maintenance region. An essential for nuclear membrane localization region spans residues 406 to 424 (KLFIVLLVLLLIGVYYIFY).

In terms of assembly, interacts with Med. Interacts with Lam. Interacts with aurA, alphaTub84B, gammaTub23C and gammaTub37C. Interacts with Nemp. Post-translationally, phosphorylation at Thr-63 by aurA may be required for exit from mitosis. May be phosphorylated by Cdk1 and Pka-C1. Expressed in all cell types of the germarium and testis. Expressed in nurse cells, follicle cells and oocytes.

The protein resides in the nucleus inner membrane. The protein localises to the nucleus. It is found in the nucleoplasm. Its subcellular location is the cytoplasm. It localises to the chromosome. The protein resides in the cytoskeleton. The protein localises to the spindle pole. It is found in the microtubule organizing center. Its subcellular location is the centrosome. Its function is as follows. Inner nuclear membrane protein. Involved in the attachment of membrane vesicles to chromatin during nuclear assembly, and is probably required for centrosome maturation and cell cycle progression during mitosis. Essential for differentiation of certain tissues and the maintenance of progenitor cell populations. Required for the differentiation and maintenance of male and female germline stem cells (GSCs), as well as the maintenance of somatic cells in the GSC niche. This role is likely to be independent of the BMP (Dpp) pathway that negatively regulates bam transcription during GSC differentiation. During development, plays essential and redundant functions with the other LEM domain proteins; bocks and MAN1. Also has a redundant but important role with bocks during larval development. The sequence is that of Otefin from Drosophila melanogaster (Fruit fly).